The primary structure comprises 576 residues: Putative pentatricopeptide repeat-containing protein At5g47460 (576 aa).

PPR repeat units lie at residues 20-53, 54-88, 89-119, 120-154, 155-189, 191-225, 226-252, 253-287, 288-318, 319-353, 354-384, 385-419, 421-452, and 458-488; these read SSNS…GEKP, DASP…GFVS, NTRL…MPDP, DVIS…DVFP, NEFS…GLEK, NVVV…DTVS, WNAI…MPNP, DTVT…NSSS, WNTI…GVRF, DEYS…GLDS, RVVV…MPRK, NLIV…RFLK, DRFT…MINE, and SVEH…FGFG. Positions 493–570 are type E motif; sequence AWRALLGACS…EVGSSWIDSR (78 aa).

Belongs to the PPR family. PCMP-E subfamily.

This Arabidopsis thaliana (Mouse-ear cress) protein is Putative pentatricopeptide repeat-containing protein At5g47460 (PCMP-E103).